The primary structure comprises 171 residues: Urease accessory protein UreE (171 aa).

Residues 143–171 (SGGHQHHHGHDHDHGHHGHDHDHHHPDHE) form a disordered region. Positions 152–171 (HDHDHGHHGHDHDHHHPDHE) are enriched in basic and acidic residues.

Belongs to the UreE family.

The protein localises to the cytoplasm. Involved in urease metallocenter assembly. Binds nickel. Probably functions as a nickel donor during metallocenter assembly. This chain is Urease accessory protein UreE, found in Brucella abortus biovar 1 (strain 9-941).